The primary structure comprises 156 residues: Small ribosomal subunit protein uS7 (156 aa).

This sequence belongs to the universal ribosomal protein uS7 family. In terms of assembly, part of the 30S ribosomal subunit. Contacts proteins S9 and S11.

Its function is as follows. One of the primary rRNA binding proteins, it binds directly to 16S rRNA where it nucleates assembly of the head domain of the 30S subunit. Is located at the subunit interface close to the decoding center, probably blocks exit of the E-site tRNA. This chain is Small ribosomal subunit protein uS7, found in Clavibacter michiganensis subsp. michiganensis (strain NCPPB 382).